The sequence spans 194 residues: Protein PHLOEM PROTEIN 2-LIKE A2 (194 aa).

The helical transmembrane segment at 49 to 71 (VTFVFFCFFKISLNSAYLYTLYS) threads the bilayer.

In terms of tissue distribution, vascular tissues, specifically in phloem companion cell-sieve element complexes.

It is found in the membrane. The sequence is that of Protein PHLOEM PROTEIN 2-LIKE A2 (PP2A2) from Arabidopsis thaliana (Mouse-ear cress).